Consider the following 638-residue polypeptide: Gamma-aminobutyric acid receptor subunit theta (638 aa).

The N-terminal stretch at 1–21 (MGIRGMLRAAALLLLIRTWLA) is a signal peptide. At 22-267 (ESNGPSPTPK…FQVQREVRSY (246 aa)) the chain is on the extracellular side. An N-linked (GlcNAc...) asparagine glycan is attached at N127. An intrachain disulfide couples C183 to C197. A helical membrane pass occupies residues 268–288 (LVQVYWPTVLTTILSWISFWM). Topologically, residues 289–296 (NYDSSAAR) are cytoplasmic. A helical membrane pass occupies residues 297 to 314 (VTIGLTSILVLTTIDSHM). Residues 315-325 (RDKLPHISCIK) lie on the Extracellular side of the membrane. A helical membrane pass occupies residues 326-346 (AIDIYILVCLFFVFLSLLEYV). The Cytoplasmic segment spans residues 347–617 (YINYLFFSQV…NRVPKVDRWS (271 aa)). Residues 491 to 515 (ACDDEDSEESLSSEESHGHGSSHTG) form a disordered region. Over residues 492-502 (CDDEDSEESLS) the composition is skewed to acidic residues. Residues 618-638 (RFLFPLSFGLFNVVYWLYHVY) form a helical membrane-spanning segment.

Belongs to the ligand-gated ion channel (TC 1.A.9) family. Gamma-aminobutyric acid receptor (TC 1.A.9.5) subfamily. GABRQ sub-subfamily. Heteropentamer, formed by a combination of alpha (GABRA1-6), beta (GABRB1-3), gamma (GABRG1-3), delta (GABRD), epsilon (GABRE), rho (GABRR1-3), pi (GABRP) and theta (GABRQ) chains, each subunit exhibiting distinct physiological and pharmacological properties. As to expression, expressed in brain, lung, and spleen.

The protein resides in the postsynaptic cell membrane. It localises to the cell membrane. It carries out the reaction chloride(in) = chloride(out). Its activity is regulated as follows. Potentiated by etomidate, propofol, pregnanolone and pentobarbital. Functionally, theta subunit of the heteropentameric ligand-gated chloride channel gated by gamma-aminobutyric acid (GABA), a major inhibitory neurotransmitter in the brain. GABA-gated chloride channels, also named GABA(A) receptors (GABAAR), consist of five subunits arranged around a central pore and contain GABA active binding site(s) located at the alpha and beta subunit interfaces. When activated by GABA, GABAARs selectively allow the flow of chloride anions across the cell membrane down their electrochemical gradient. The chain is Gamma-aminobutyric acid receptor subunit theta from Mus musculus (Mouse).